A 193-amino-acid polypeptide reads, in one-letter code: Peptidyl-tRNA hydrolase (193 aa).

Residue Tyr-17 participates in tRNA binding. His-22 functions as the Proton acceptor in the catalytic mechanism. The tRNA site is built by Phe-68, Asn-70, and Asn-116.

It belongs to the PTH family. Monomer.

The protein localises to the cytoplasm. It carries out the reaction an N-acyl-L-alpha-aminoacyl-tRNA + H2O = an N-acyl-L-amino acid + a tRNA + H(+). Hydrolyzes ribosome-free peptidyl-tRNAs (with 1 or more amino acids incorporated), which drop off the ribosome during protein synthesis, or as a result of ribosome stalling. In terms of biological role, catalyzes the release of premature peptidyl moieties from peptidyl-tRNA molecules trapped in stalled 50S ribosomal subunits, and thus maintains levels of free tRNAs and 50S ribosomes. The polypeptide is Peptidyl-tRNA hydrolase (Acinetobacter baylyi (strain ATCC 33305 / BD413 / ADP1)).